Consider the following 151-residue polypeptide: MIVNNAHILTLPIPYHAPSVILTITCILIRHTHTDATIVYTISTYPTFTFHSMAHLSLHEYKCTHIIMHGTCLSGLYPVPFTHNSHYYPHFNIYILFRGPKYCINALNTYVIPLFHRILTTQFIYTYANITKKSPLKSPKHKNILSFNNNT.

Belongs to the UPF0320 family.

The polypeptide is Putative UPF0320 protein YFL063W (Saccharomyces cerevisiae (strain ATCC 204508 / S288c) (Baker's yeast)).